The chain runs to 455 residues: 3-phosphoshikimate 1-carboxyvinyltransferase (455 aa).

The span at 1–19 (MSHGASSRPATARKSSGLS) shows a compositional bias: polar residues. Positions 1–25 (MSHGASSRPATARKSSGLSGTVRIP) are disordered. Lys28 serves as a coordination point for phosphoenolpyruvate. 3-phosphoshikimate-binding residues include Ser29 and Arg33. Arg128 serves as a coordination point for phosphoenolpyruvate. Ser173, Ala174, Gln175, Asp326, and Lys353 together coordinate 3-phosphoshikimate. Gln175 is a phosphoenolpyruvate binding site. Asp326 acts as the Proton acceptor in catalysis. Phosphoenolpyruvate contacts are provided by Arg357 and Arg405.

The protein belongs to the EPSP synthase family. In terms of assembly, monomer.

It localises to the cytoplasm. The enzyme catalyses 3-phosphoshikimate + phosphoenolpyruvate = 5-O-(1-carboxyvinyl)-3-phosphoshikimate + phosphate. Its pathway is metabolic intermediate biosynthesis; chorismate biosynthesis; chorismate from D-erythrose 4-phosphate and phosphoenolpyruvate: step 6/7. With respect to regulation, is resistant to inhibition by glyphosate (glyphosate-tolerant) like other members of class II EPSPS, in contrast to class I EPSPS, which is glyphosate-sensitive. Is much less sensitive to inhibition by the (R)-difluoromethyl and (R)-phosphonate analogs of the tetrahedral reaction intermediate than the representative class I EPSPS from E.coli. Is highly activated in the presence of cations, such as NH4(+), Rb(+), and K(+). Functionally, catalyzes the transfer of the enolpyruvyl moiety of phosphoenolpyruvate (PEP) to the 5-hydroxyl of shikimate-3-phosphate (S3P) to produce enolpyruvyl shikimate-3-phosphate and inorganic phosphate. The polypeptide is 3-phosphoshikimate 1-carboxyvinyltransferase (Agrobacterium sp. (strain CP4)).